The primary structure comprises 606 residues: tRNA 5-methylaminomethyl-2-thiouridine biosynthesis bifunctional protein MnmC (606 aa).

Residues 1-237 (MNSNSSVQFN…KRDMLCGHYL (237 aa)) form a tRNA (mnm(5)s(2)U34)-methyltransferase region. The FAD-dependent cmnm(5)s(2)U34 oxidoreductase stretch occupies residues 254–606 (IGGGISAACS…RRISVSRFKG (353 aa)).

It in the N-terminal section; belongs to the methyltransferase superfamily. tRNA (mnm(5)s(2)U34)-methyltransferase family. In the C-terminal section; belongs to the DAO family. FAD serves as cofactor.

It is found in the cytoplasm. It catalyses the reaction 5-aminomethyl-2-thiouridine(34) in tRNA + S-adenosyl-L-methionine = 5-methylaminomethyl-2-thiouridine(34) in tRNA + S-adenosyl-L-homocysteine + H(+). Functionally, catalyzes the last two steps in the biosynthesis of 5-methylaminomethyl-2-thiouridine (mnm(5)s(2)U) at the wobble position (U34) in tRNA. Catalyzes the FAD-dependent demodification of cmnm(5)s(2)U34 to nm(5)s(2)U34, followed by the transfer of a methyl group from S-adenosyl-L-methionine to nm(5)s(2)U34, to form mnm(5)s(2)U34. The polypeptide is tRNA 5-methylaminomethyl-2-thiouridine biosynthesis bifunctional protein MnmC (Idiomarina loihiensis (strain ATCC BAA-735 / DSM 15497 / L2-TR)).